We begin with the raw amino-acid sequence, 122 residues long: Small ribosomal subunit protein uS13 (122 aa).

The tract at residues 95–122 is disordered; sequence GLPVRGQKTKTNARTRKGPKRTVANKKK.

It belongs to the universal ribosomal protein uS13 family. In terms of assembly, part of the 30S ribosomal subunit. Forms a loose heterodimer with protein S19. Forms two bridges to the 50S subunit in the 70S ribosome.

Functionally, located at the top of the head of the 30S subunit, it contacts several helices of the 16S rRNA. In the 70S ribosome it contacts the 23S rRNA (bridge B1a) and protein L5 of the 50S subunit (bridge B1b), connecting the 2 subunits; these bridges are implicated in subunit movement. Contacts the tRNAs in the A and P-sites. This chain is Small ribosomal subunit protein uS13, found in Agathobacter rectalis (strain ATCC 33656 / DSM 3377 / JCM 17463 / KCTC 5835 / VPI 0990) (Eubacterium rectale).